The primary structure comprises 133 residues: Protein U17 (133 aa).

A helical transmembrane segment spans residues 82–102; it reads FVSVLWCVILVFVVKIKLFFL.

It localises to the membrane. The protein is Protein U17 (U17/U16) of Homo sapiens (Human).